We begin with the raw amino-acid sequence, 79 residues long: Probable [Fe-S]-dependent transcriptional repressor (79 aa).

Positions 56, 61, 64, and 70 each coordinate iron-sulfur cluster.

It belongs to the FeoC family.

May function as a transcriptional regulator that controls feoABC expression. The protein is Probable [Fe-S]-dependent transcriptional repressor of Serratia proteamaculans (strain 568).